The primary structure comprises 347 residues: Chaperone protein DnaJ 1 (347 aa).

In terms of domain architecture, J spans 5–75; it reads DPHSLLGLSP…PAAAPHDAQA (71 aa). The span at 68 to 77 shows a compositional bias: low complexity; sequence AAPHDAQAAD. The segment at 68 to 91 is disordered; that stretch reads AAPHDAQAADARPEPPPEAPPRGA. A CR-type zinc finger spans residues 107 to 181; the sequence is GGEKAFTIAD…CHGSGQARAA (75 aa). Positions 120, 123, 137, 140, 155, 158, 169, and 172 each coordinate Zn(2+). CXXCXGXG motif repeat units follow at residues 120–127, 137–144, 155–162, and 169–176; these read CGACGGSG, CATCHGSG, CADCAGRG, and CGACHGSG.

This sequence belongs to the DnaJ family. Homodimer. Requires Zn(2+) as cofactor.

The protein localises to the cytoplasm. In terms of biological role, participates actively in the response to hyperosmotic and heat shock by preventing the aggregation of stress-denatured proteins and by disaggregating proteins, also in an autonomous, DnaK-independent fashion. Unfolded proteins bind initially to DnaJ; upon interaction with the DnaJ-bound protein, DnaK hydrolyzes its bound ATP, resulting in the formation of a stable complex. GrpE releases ADP from DnaK; ATP binding to DnaK triggers the release of the substrate protein, thus completing the reaction cycle. Several rounds of ATP-dependent interactions between DnaJ, DnaK and GrpE are required for fully efficient folding. Also involved, together with DnaK and GrpE, in the DNA replication of plasmids through activation of initiation proteins. The protein is Chaperone protein DnaJ 1 of Aromatoleum aromaticum (strain DSM 19018 / LMG 30748 / EbN1) (Azoarcus sp. (strain EbN1)).